A 403-amino-acid chain; its full sequence is MLKIIDAKVIVTCPGRNFVTLKITTSDGVTGVGDATLNGRELAVVSYLRDHMIPCLIGRDAHRIEDVWQFFYRGSYWRGGPVAMTALAAVDMALWDIKAKLAGMPLYQLLGGACREGVMVYGHANGETIEDTIAEARKYQALGYKAIRLQSGVPGLPSTYGVSGDKMFYEPADGNLPTENVWSTSKYLKHAPKLFEAAREALGDDVHLLHDVHHRLTPIEAGRLGKDLEPYRLFWLEDAVPAENQAGFRLIRQHTTTPLAVGEIFSHVWDCKQLIEEQLIDYLRATVLHAGGITNLRKIAAFADLHHVRTGCHGATDLSPITMAAALHFDLSVSNFGLQEYMRHTPETDAVFPHAYSYKDGMLHPGEAPGLGVDIDEALAGQYPYKRAYLPVNRLEDGTMYNW.

Positions 38 and 123 each coordinate substrate. Catalysis depends on Y160, which acts as the Proton donor/acceptor. D211 serves as a coordination point for Mg(2+). H213 acts as the Proton donor/acceptor in catalysis. 2 residues coordinate Mg(2+): E237 and E263. 5 residues coordinate substrate: E263, R284, H313, D317, and E340.

The protein belongs to the mandelate racemase/muconate lactonizing enzyme family. GalD subfamily. Requires Mg(2+) as cofactor.

It catalyses the reaction D-mannonate = 2-dehydro-3-deoxy-D-gluconate + H2O. It participates in carbohydrate metabolism; pentose and glucuronate interconversion. Functionally, catalyzes the dehydration of D-mannonate. Has no detectable activity with a panel of 70 other acid sugars (in vitro). This chain is D-mannonate dehydratase Caul1427, found in Caulobacter sp. (strain K31).